The primary structure comprises 159 residues: Carbohydrate sulfotransferase 15 (159 aa).

Over Ser-1–Lys-159 the chain is Lumenal. Residues Asn-42 and Asn-112 are each glycosylated (N-linked (GlcNAc...) asparagine).

Belongs to the sulfotransferase 1 family. Requires a divalent metal cation as cofactor. Glutathione is required as a cofactor.

It localises to the golgi apparatus membrane. The enzyme catalyses dermatan 4'-sulfate + n 3'-phosphoadenylyl sulfate = dermatan 4',6'-bissulfate + n adenosine 3',5'-bisphosphate + n H(+). It carries out the reaction chondroitin 4'-sulfate + n 3'-phosphoadenylyl sulfate = chondroitin 4',6'-bissulfate + n adenosine 3',5'-bisphosphate + n H(+). Functionally, sulfotransferase that transfers sulfate from 3'-phosphoadenosine 5'-phosphosulfate (PAPS) to the C-6 hydroxyl group of the GalNAc 4-sulfate residue of chondroitin sulfate A and forms chondroitin sulfate E containing GlcA-GalNAc(4,6-SO(4)) repeating units. This chain is Carbohydrate sulfotransferase 15 (GALNAC4S6ST), found in Nototodarus sloanii (Wellington flying squid).